We begin with the raw amino-acid sequence, 230 residues long: 2,3-bisphosphoglycerate-dependent phosphoglycerate mutase (230 aa).

Residues 8–15, 21–22, R60, 87–90, K98, 114–115, and 183–184 each bind substrate; these read RHGESEWN, TG, ERHY, RR, and GN. H9 serves as the catalytic Tele-phosphohistidine intermediate. The active-site Proton donor/acceptor is the E87.

It belongs to the phosphoglycerate mutase family. BPG-dependent PGAM subfamily.

It carries out the reaction (2R)-2-phosphoglycerate = (2R)-3-phosphoglycerate. It participates in carbohydrate degradation; glycolysis; pyruvate from D-glyceraldehyde 3-phosphate: step 3/5. In terms of biological role, catalyzes the interconversion of 2-phosphoglycerate and 3-phosphoglycerate. This is 2,3-bisphosphoglycerate-dependent phosphoglycerate mutase from Streptococcus mutans serotype c (strain ATCC 700610 / UA159).